Reading from the N-terminus, the 138-residue chain is Centromere protein S (138 aa).

The residue at position 1 (Met1) is an N-acetylmethionine. The tract at residues 112-138 (AKKKKKLEDENRNSVESAEAGVEESEN) is disordered.

This sequence belongs to the TAF9 family. CENP-S/MHF1 subfamily. In terms of assembly, heterodimer with CENPX, sometimes called MHF; this interaction stabilizes both partners. MHF heterodimers can assemble to form tetrameric structures. MHF also coassemble with CENPT-CENPW heterodimers at centromeres to form the tetrameric CENP-T-W-S-X complex. Forms a discrete complex with FANCM and CENPX, called FANCM-MHF; this interaction, probably mediated by direct binding between CENPS and FANCM, leads to synergistic activation of double-stranded DNA binding and strongly stimulates FANCM-mediated DNA remodeling. Recruited by FANCM to the Fanconi anemia (FA) core complex, which consists of CENPS, CENPX, FANCA, FANCB, FANCC, FANCE, FANCF, FANCG, FANCL, FANCM, FAAP24 and FAAP100. The FA core complex associates with Bloom syndrome (BLM) complex, which consists of at least BLM, DNA topoisomerase 3-alpha (TOP3A), RMI1/BLAP75, RPA1/RPA70 and RPA2/RPA32. The super complex between FA and BLM is called BRAFT. Component of the CENPA-CAD complex, composed of CENPI, CENPK, CENPL, CENPO, CENPP, CENPQ, CENPR and CENPS. The CENPA-CAD complex is probably recruited on centromeres by the CENPA-NAC complex, at least composed of CENPA, CENPC, CENPH, CENPM, CENPN, CENPT and CENPU.

It is found in the nucleus. The protein localises to the chromosome. Its subcellular location is the centromere. The protein resides in the kinetochore. Its function is as follows. DNA-binding component of the Fanconi anemia (FA) core complex. Required for the normal activation of the FA pathway, leading to monoubiquitination of the FANCI-FANCD2 complex in response to DNA damage, cellular resistance to DNA cross-linking drugs, and prevention of chromosomal breakage. In complex with CENPX (MHF heterodimer), crucial cofactor for FANCM in both binding and ATP-dependent remodeling of DNA. Stabilizes FANCM. In complex with CENPX and FANCM (but not other FANC proteins), rapidly recruited to blocked forks and promotes gene conversion at blocked replication forks. In complex with CENPT, CENPW and CENPX (CENP-T-W-S-X heterotetramer), involved in the formation of a functional kinetochore outer plate, which is essential for kinetochore-microtubule attachment and faithful mitotic progression. As a component of MHF and CENP-T-W-S-X complexes, binds DNA and bends it to form a nucleosome-like structure. DNA-binding function is fulfilled in the presence of CENPX, with the following preference for DNA substates: Holliday junction &gt; double-stranded &gt; splay arm &gt; single-stranded. Does not bind DNA on its own. The polypeptide is Centromere protein S (CENPS) (Bos taurus (Bovine)).